The sequence spans 198 residues: Proteasome subunit beta 1 (198 aa).

Residues Met-1 to Ala-6 constitute a propeptide, removed in mature form; by autocatalysis. Thr-7 acts as the Nucleophile in catalysis.

It belongs to the peptidase T1B family. The 20S proteasome core is composed of 14 alpha and 14 beta subunits that assemble into four stacked heptameric rings, resulting in a barrel-shaped structure. The two inner rings, each composed of seven catalytic beta subunits, are sandwiched by two outer rings, each composed of seven alpha subunits. The catalytic chamber with the active sites is on the inside of the barrel. Has a gated structure, the ends of the cylinder being occluded by the N-termini of the alpha-subunits. Is capped at one or both ends by the proteasome regulatory ATPase, PAN.

It localises to the cytoplasm. The catalysed reaction is Cleavage of peptide bonds with very broad specificity.. With respect to regulation, the formation of the proteasomal ATPase PAN-20S proteasome complex, via the docking of the C-termini of PAN into the intersubunit pockets in the alpha-rings, triggers opening of the gate for substrate entry. Interconversion between the open-gate and close-gate conformations leads to a dynamic regulation of the 20S proteasome proteolysis activity. Functionally, component of the proteasome core, a large protease complex with broad specificity involved in protein degradation. The chain is Proteasome subunit beta 1 from Ignicoccus hospitalis (strain KIN4/I / DSM 18386 / JCM 14125).